The sequence spans 593 residues: Probable serine/threonine-protein kinase fhkA (593 aa).

Residues 1–24 (MSQTNYIPSTPNKSTPPSELSSTP) are disordered. One can recognise an FHA domain in the interval 54 to 111 (ITIGRSKTCNIVVPELIVSGKHCIITRADAIENGNTNYGLLMIQDQSTNGTFINGKLI). The Protein kinase domain maps to 180 to 472 (YDFIKELGSG…VEQALNHPWI (293 aa)). Residues 186–194 (LGSGNFSVV) and Lys-209 contribute to the ATP site. The active-site Proton acceptor is Asp-307.

It belongs to the protein kinase superfamily. CAMK Ser/Thr protein kinase family. CHK2 subfamily.

The enzyme catalyses L-seryl-[protein] + ATP = O-phospho-L-seryl-[protein] + ADP + H(+). The catalysed reaction is L-threonyl-[protein] + ATP = O-phospho-L-threonyl-[protein] + ADP + H(+). The chain is Probable serine/threonine-protein kinase fhkA (fhkA) from Dictyostelium discoideum (Social amoeba).